The primary structure comprises 589 residues: MSVTVHENRKSRTSTGSMNISLYHKLSHSDCVLNHLNTMRKQRLFTDVTLWAGNRSFPCHRAVLAACSQYFEAMFSNGLRESLDNTVNFHDSLHPEVLELLLDFAYSSKIIINEENAESLLEAGDMLQFHDIRDAACEFLEKNLYPSNCLGMMILSDAHQCQRLYELSLRTCLSNFATLHNTEDFCSLSKDMVLDLISSDELEIEDEQVVFNSVLHWVKEDLDKRKDYFPELLRKVRLALLPSELLKEAVVCEDLIIADERSKLIMDEAVVCKKKILQNDGVVTSLCAKPRKAGHTLLILGGQTFMCDKIYQVDHKAKEIIPKADLPSPRKEFSACAIGCKVYVTGGRGSENGVSKDVWVYDTINEEWSKSAPMLIARFGHGSAELENCLYVVGGHTAVAGVFPASPSVSLKQVEKYDPLTNKWTMMAPLRDGVSNAAVVSAKLKLFAFGGTSIHRDRVSKVQCYDPDENRWSIKAECPQPWRYTAAAVLGSQIFIMGGDTEFTAASAYRFDCETNQWTRIGDMTAKRMSCHALASGNKVYVVGGYFGTQRCKTLDCYDPTSDSWNSITSVPYSLIPTAFVSTWKHLPA.

The BTB domain occupies 46–114 (TDVTLWAGNR…AYSSKIIINE (69 aa)). The 102-residue stretch at 149–250 (CLGMMILSDA…LPSELLKEAV (102 aa)) folds into the BACK domain. 6 Kelch repeats span residues 296–340 (TLLI…AIGC), 341–388 (KVYV…ELEN), 389–444 (CLYV…SAKL), 446–492 (LFAF…VLGS), 493–538 (QIFI…ASGN), and 539–585 (KVYV…STWK).

In terms of assembly, component of the BCR(KLHL25) E3 ubiquitin ligase complex, at least composed of cul3, klhl25 and rbx1.

Its pathway is protein modification; protein ubiquitination. Substrate-specific adapter of a BCR (BTB-CUL3-RBX1) E3 ubiquitin ligase complex involved in various processes, such as translation homeostasis and lipid synthesis. The BCR(KLHL25) ubiquitin ligase complex acts by mediating ubiquitination of hypophosphorylated eif4ebp1 (4E-BP1): ubiquitination and subsequent degradation of hypophosphorylated EIF4EBP1 (4E-BP1) probably serves as a homeostatic mechanism to maintain translation and prevent eIF4E inhibition when eIF4E levels are low. The BCR(KLHL25) complex also acts as a regulator of lipid synthesis by mediating ubiquitination and degradation of ACLY, thereby inhibiting lipid synthesis. This chain is Kelch-like protein 25, found in Xenopus tropicalis (Western clawed frog).